A 705-amino-acid chain; its full sequence is Zinc finger protein 770 (705 aa).

Lys-16 participates in a covalent cross-link: Glycyl lysine isopeptide (Lys-Gly) (interchain with G-Cter in SUMO2). C2H2-type zinc fingers lie at residues Tyr-31–His-53, Phe-59–His-81, and Phe-85–His-107. Residues Lys-116, Lys-124, and Lys-149 each participate in a glycyl lysine isopeptide (Lys-Gly) (interchain with G-Cter in SUMO2) cross-link. C2H2-type zinc fingers lie at residues His-164–His-186, Phe-192–His-214, and Phe-220–His-242. Residue Lys-266 forms a Glycyl lysine isopeptide (Lys-Gly) (interchain with G-Cter in SUMO2) linkage. A C2H2-type 7; degenerate zinc finger spans residues Phe-298–Arg-322. 4 consecutive C2H2-type zinc fingers follow at residues Cys-485 to His-507, Phe-513 to His-535, Tyr-640 to His-662, and Phe-668 to His-690. Lys-698 is covalently cross-linked (Glycyl lysine isopeptide (Lys-Gly) (interchain with G-Cter in SUMO2)).

It belongs to the krueppel C2H2-type zinc-finger protein family.

It localises to the nucleus. In terms of biological role, may be involved in transcriptional regulation. The chain is Zinc finger protein 770 (Znf770) from Mus musculus (Mouse).